We begin with the raw amino-acid sequence, 340 residues long: DNA-directed RNA polymerase subunit alpha (340 aa).

The interval 1–233 (MYRNWRDLIS…EQLSIFINFD (233 aa)) is alpha N-terminal domain (alpha-NTD). Residues 251 to 340 (VNENLYRSVD…RIRGERKDEE (90 aa)) form an alpha C-terminal domain (alpha-CTD) region.

The protein belongs to the RNA polymerase alpha chain family. In terms of assembly, homodimer. The RNAP catalytic core consists of 2 alpha, 1 beta, 1 beta' and 1 omega subunit. When a sigma factor is associated with the core the holoenzyme is formed, which can initiate transcription.

The enzyme catalyses RNA(n) + a ribonucleoside 5'-triphosphate = RNA(n+1) + diphosphate. In terms of biological role, DNA-dependent RNA polymerase catalyzes the transcription of DNA into RNA using the four ribonucleoside triphosphates as substrates. The sequence is that of DNA-directed RNA polymerase subunit alpha from Geobacter metallireducens (strain ATCC 53774 / DSM 7210 / GS-15).